We begin with the raw amino-acid sequence, 498 residues long: Cytochrome P450 monooxygenase 110 (498 aa).

A helical membrane pass occupies residues 7–24 (YVFALLGILATLYFVRWS). N425 carries an N-linked (GlcNAc...) asparagine glycan. A heme-binding site is contributed by C440.

Belongs to the cytochrome P450 family. The cofactor is heme.

It is found in the membrane. Its pathway is secondary metabolite biosynthesis. Cytochrome P450 monooxygenase that is able to use dehydroabietic acid and testosterone as substrates for oxidation, suggesting that the natural substrate(s) may be structurally related to steroid compounds. This chain is Cytochrome P450 monooxygenase 110, found in Postia placenta (strain ATCC 44394 / Madison 698-R) (Brown rot fungus).